The sequence spans 359 residues: Replication-associated protein (359 aa).

The region spanning 18-121 is the CRESS-DNA virus Rep endonuclease domain; the sequence is RHRNANTFLT…PKDKWEKGTY (104 aa). The RCR-1 signature appears at 25–28; the sequence is FLTY. Glu-59, His-67, and His-69 together coordinate a divalent metal cation. The short motif at 67-69 is the RCR-2 element; sequence HCH. Tyr-107 functions as the For DNA cleavage activity in the catalytic mechanism. The short motif at 107–110 is the RCR-3 element; that stretch reads YILK. A divalent metal cation is bound at residue Asp-111. The oligomerization stretch occupies residues 181-193; it reads SASRLFPDIAEPY. 235–242 contacts ATP; sequence GPTRTGKT. Residues 258–276 are transactivation; that stretch reads IDWSSYDEEAQYNVVDDIP. The Nuclear localization signal signature appears at 298–309; sequence KYGKRRKVASKS.

It belongs to the geminiviridae Rep protein family. Homooligomer. Rep binds to repeated DNA motifs (iterons). Forms the O-complex, which is a Rep-DNA complex involved in the initiation of RCR. Part of the C- and V-complexes which are RepA-Rep-DNA complexes involved in the c-sense and v-sense transcription. Mg(2+) serves as cofactor. It depends on Mn(2+) as a cofactor.

Its subcellular location is the host nucleus. Its function is as follows. Essential for the replication of viral ssDNA. The closed circular ssDNA genome is first converted to a superhelical dsDNA. Rep binds a specific region at the genome origin of replication. It introduces an endonucleolytic nick within the conserved sequence 5'-TAATATTAC-3' in the intergenic region of the genome present in all geminiviruses, thereby initiating the rolling circle replication (RCR). Following cleavage, binds covalently to the 5'-phosphate of DNA as a tyrosyl ester. The cleavage gives rise to a free 3'-OH that serves as a primer for the cellular DNA polymerase. The polymerase synthesizes the (+) strand DNA by rolling circle mechanism. After one round of replication, a Rep-catalyzed nucleotidyl transfer reaction releases a circular single-stranded virus genome, thereby terminating the replication. Displays origin-specific DNA cleavage, nucleotidyl transferase, ATPase and helicase activities. Acts as an inhibitor of C-sense gene transcription. This chain is Replication-associated protein, found in Megathyrsus maximus (PanSV).